The sequence spans 181 residues: Acireductone dioxygenase (181 aa).

Residues His97, His99, Glu103, and His141 each contribute to the Fe(2+) site. Positions 97, 99, 103, and 141 each coordinate Ni(2+).

This sequence belongs to the acireductone dioxygenase (ARD) family. As to quaternary structure, monomer. Fe(2+) serves as cofactor. It depends on Ni(2+) as a cofactor.

It catalyses the reaction 1,2-dihydroxy-5-(methylsulfanyl)pent-1-en-3-one + O2 = 3-(methylsulfanyl)propanoate + CO + formate + 2 H(+). It carries out the reaction 1,2-dihydroxy-5-(methylsulfanyl)pent-1-en-3-one + O2 = 4-methylsulfanyl-2-oxobutanoate + formate + 2 H(+). The protein operates within amino-acid biosynthesis; L-methionine biosynthesis via salvage pathway; L-methionine from S-methyl-5-thio-alpha-D-ribose 1-phosphate: step 5/6. Its function is as follows. Catalyzes 2 different reactions between oxygen and the acireductone 1,2-dihydroxy-3-keto-5-methylthiopentene (DHK-MTPene) depending upon the metal bound in the active site. Fe-containing acireductone dioxygenase (Fe-ARD) produces formate and 2-keto-4-methylthiobutyrate (KMTB), the alpha-ketoacid precursor of methionine in the methionine recycle pathway. Ni-containing acireductone dioxygenase (Ni-ARD) produces methylthiopropionate, carbon monoxide and formate, and does not lie on the methionine recycle pathway. The chain is Acireductone dioxygenase from Stutzerimonas stutzeri (strain A1501) (Pseudomonas stutzeri).